Consider the following 110-residue polypeptide: Large ribosomal subunit protein mL60 (110 aa).

The protein belongs to the mitochondrion-specific ribosomal protein mL60 family. In terms of assembly, component of the mitochondrial large ribosomal subunit (mt-LSU). Mature N.crassa 74S mitochondrial ribosomes consist of a small (37S) and a large (54S) subunit. The 37S small subunit contains a 16S ribosomal RNA (16S mt-rRNA) and 32 different proteins. The 54S large subunit contains a 23S rRNA (23S mt-rRNA) and 42 different proteins.

It is found in the mitochondrion. Component of the mitochondrial ribosome (mitoribosome), a dedicated translation machinery responsible for the synthesis of mitochondrial genome-encoded proteins, including at least some of the essential transmembrane subunits of the mitochondrial respiratory chain. The mitoribosomes are attached to the mitochondrial inner membrane and translation products are cotranslationally integrated into the membrane. The polypeptide is Large ribosomal subunit protein mL60 (mrpl31) (Neurospora crassa (strain ATCC 24698 / 74-OR23-1A / CBS 708.71 / DSM 1257 / FGSC 987)).